We begin with the raw amino-acid sequence, 120 residues long: MEAEVDKLELMFQKADSDLDYLQYRLEYEVKTNHPHSAGEKNAVTVLKELSAIKSRYQALCARFKAVSVEQKETKSCICATLNKTMTMIQELQKQTNLELTLLTEEEKAATEPLKSHMPD.

The protein belongs to the SKA2 family. In terms of assembly, component of the SKA complex, composed of SKA1, SKA2 and SKA3. The SKA complex is a homodimer organized around a central W-shaped coiled-coil structure, formed by the interacting domains of SKA1, SKA2, and SKA3, each end of the 'W' is extended further by the C-terminal microtubule-binding domains of SKA1 and SKA3; the complex forms extended structures on microtubules. May interact with NR3C1; the relevance of such interaction remains unclear in vivo. Interacts with the MIS12 complex subunit DSN1. Interacts with the NDC80 complex; the interaction is required to establish kinetochore-microtubule end-on attachments.

It is found in the cytoplasm. It localises to the cytoskeleton. Its subcellular location is the spindle. The protein localises to the chromosome. The protein resides in the centromere. It is found in the kinetochore. It localises to the microtubule organizing center. Its subcellular location is the centrosome. Its function is as follows. Component of the SKA complex, a microtubule plus end-binding complex of the outer kinetochore that stabilizes spindle microtubule-kinetochore attachments, promotes alignment of chromosomes at the mitotic spindle equator (chromosome congression) and assists suppression of the spindle assembly checkpoint. Kinetochores, consisting of a centromere-associated inner segment and a microtubule-contacting outer segment, play a crucial role in chromosome segregation by mediating the physical connection between centromeric DNA and spindle microtubules. The outer kinetochore is made up of the ten-subunit KMN network complex, comprising the MIS12, NDC80 and KNL1 complexes, and auxiliary microtubule-associated components such as the SKA complex; together they connect the outer kinetochore with the inner kinetochore, bind microtubules, and mediate interactions with mitotic checkpoint proteins that delay anaphase until chromosomes are bioriented on the spindle. The SKA complex is loaded onto bioriented kinetochores and it facilitates chromosome congression by stabilizing microtubules together with MAPRE1, and end-on attachment of the NDC80 complex to depolymerizing spindle microtubules, thereby assisting the poleward-moving kinetochore in withstanding microtubule pulling forces. The complex associates with dynamic microtubule plus-ends and can track both depolymerizing and elongating microtubules. The complex recruits protein phosphatase 1 (PP1) to the kinetochore in prometaphase and metaphase, to oppose spindle assembly checkpoint signaling and promote the onset of anaphase. Binds directly to microtubules; but with a much lower affinity than SKA1. During meiosis the SKA complex stabilizes the meiotic spindle and is required for its migration to the cortex. The sequence is that of SKA complex subunit 2 (Ska2) from Mus musculus (Mouse).